A 167-amino-acid polypeptide reads, in one-letter code: Methylated-DNA--protein-cysteine methyltransferase (167 aa).

The Nucleophile; methyl group acceptor role is filled by Cys-128.

The protein belongs to the MGMT family.

It localises to the cytoplasm. It catalyses the reaction a 6-O-methyl-2'-deoxyguanosine in DNA + L-cysteinyl-[protein] = S-methyl-L-cysteinyl-[protein] + a 2'-deoxyguanosine in DNA. The catalysed reaction is a 4-O-methyl-thymidine in DNA + L-cysteinyl-[protein] = a thymidine in DNA + S-methyl-L-cysteinyl-[protein]. Its function is as follows. Involved in the cellular defense against the biological effects of O6-methylguanine (O6-MeG) and O4-methylthymine (O4-MeT) in DNA. Repairs the methylated nucleobase in DNA by stoichiometrically transferring the methyl group to a cysteine residue in the enzyme. This is a suicide reaction: the enzyme is irreversibly inactivated. This is Methylated-DNA--protein-cysteine methyltransferase from Methanocaldococcus jannaschii (strain ATCC 43067 / DSM 2661 / JAL-1 / JCM 10045 / NBRC 100440) (Methanococcus jannaschii).